A 393-amino-acid polypeptide reads, in one-letter code: uncharacterized protein (393 aa).

This is an uncharacterized protein from Methanocaldococcus jannaschii (strain ATCC 43067 / DSM 2661 / JAL-1 / JCM 10045 / NBRC 100440) (Methanococcus jannaschii).